Here is a 319-residue protein sequence, read N- to C-terminus: Ribosomal large subunit pseudouridine synthase C (319 aa).

The S4 RNA-binding domain maps to 20-83; sequence QRIDNFLRTQ…AEREEEAVSP (64 aa). Aspartate 144 is an active-site residue.

This sequence belongs to the pseudouridine synthase RluA family.

It carries out the reaction uridine(955/2504/2580) in 23S rRNA = pseudouridine(955/2504/2580) in 23S rRNA. Its function is as follows. Responsible for synthesis of pseudouridine from uracil at positions 955, 2504 and 2580 in 23S ribosomal RNA. This chain is Ribosomal large subunit pseudouridine synthase C (rluC), found in Escherichia coli O6:H1 (strain CFT073 / ATCC 700928 / UPEC).